The primary structure comprises 738 residues: Prolyl oligopeptidase A (738 aa).

Residues S581, D665, and H701 each act as charge relay system in the active site.

This sequence belongs to the peptidase S9A family. In terms of assembly, monomer.

The enzyme catalyses Hydrolysis of Pro-|-Xaa &gt;&gt; Ala-|-Xaa in oligopeptides.. Housekeeping prolyl oligopeptidase (POP) that behaves like a conventional POP by cleaving peptide bonds on the C-terminal side of prolyl residues within peptides that are up to approximately 30 amino acids long. This chain is Prolyl oligopeptidase A, found in Galerina marginata (strain CBS 339.88).